The chain runs to 95 residues: Large ribosomal subunit protein bL25 (95 aa).

This sequence belongs to the bacterial ribosomal protein bL25 family. In terms of assembly, part of the 50S ribosomal subunit; part of the 5S rRNA/L5/L18/L25 subcomplex. Contacts the 5S rRNA. Binds to the 5S rRNA independently of L5 and L18.

Its function is as follows. This is one of the proteins that binds to the 5S RNA in the ribosome where it forms part of the central protuberance. This is Large ribosomal subunit protein bL25 from Actinobacillus succinogenes (strain ATCC 55618 / DSM 22257 / CCUG 43843 / 130Z).